Reading from the N-terminus, the 619-residue chain is Chaperone protein HscA homolog (619 aa).

The protein belongs to the heat shock protein 70 family.

Its function is as follows. Chaperone involved in the maturation of iron-sulfur cluster-containing proteins. Has a low intrinsic ATPase activity which is markedly stimulated by HscB. In Pseudomonas paraeruginosa (strain DSM 24068 / PA7) (Pseudomonas aeruginosa (strain PA7)), this protein is Chaperone protein HscA homolog.